Reading from the N-terminus, the 538-residue chain is L-aspartate oxidase (538 aa).

FAD is bound by residues 14–17 (SGAA), K36, 43–50 (STYWAQGG), and D223. R290 functions as the Proton donor/acceptor in the catalytic mechanism. Residues E375 and 391–392 (SL) each bind FAD.

This sequence belongs to the FAD-dependent oxidoreductase 2 family. NadB subfamily. It depends on FAD as a cofactor.

Its subcellular location is the cytoplasm. It carries out the reaction L-aspartate + O2 = iminosuccinate + H2O2. The protein operates within cofactor biosynthesis; NAD(+) biosynthesis; iminoaspartate from L-aspartate (oxidase route): step 1/1. In terms of biological role, catalyzes the oxidation of L-aspartate to iminoaspartate, the first step in the de novo biosynthesis of NAD(+). This Pseudomonas aeruginosa (strain ATCC 15692 / DSM 22644 / CIP 104116 / JCM 14847 / LMG 12228 / 1C / PRS 101 / PAO1) protein is L-aspartate oxidase (nadB).